The sequence spans 108 residues: MLAKGAEEGRSGGPRPAITLPGSLHFTCDLKTSPYCLTRAELMEHLPLRVAVHSMSPCHRSCFCGELKRGHPWNTPQVSSFPSSTTSLSHSCTTSHLDCSQQVESGSK.

The disordered stretch occupies residues 75–94 (TPQVSSFPSSTTSLSHSCTT). The span at 79 to 94 (SSFPSSTTSLSHSCTT) shows a compositional bias: low complexity.

This is an uncharacterized protein from Homo sapiens (Human).